We begin with the raw amino-acid sequence, 106 residues long: UPF0145 protein (106 aa).

It belongs to the UPF0145 family.

This is UPF0145 protein from Listeria grayi (Listeria murrayi).